We begin with the raw amino-acid sequence, 120 residues long: Insulin-like peptide 3 (120 aa).

The N-terminal stretch at 1 to 29 (MGIEMRCQDRRILLPSLLLLILMIGGVQA) is a signal peptide. Cystine bridges form between cysteine 34–cysteine 101, cysteine 46–cysteine 114, and cysteine 100–cysteine 105. The propeptide at 51–89 (NAMTKRTLDPVNFNQIDGFEDRSLLERLLSDSSVQMLKT) is connecting peptide.

Belongs to the insulin family. In terms of assembly, heterodimer of a B chain and an A chain linked by two disulfide bonds. As to expression, expressed at a high level in seven cells of each larval brain hemisphere that may correspond to neurosecretory cells.

It is found in the secreted. In terms of biological role, possible ligand of InR/insulin-like receptor. This chain is Insulin-like peptide 3, found in Drosophila melanogaster (Fruit fly).